The primary structure comprises 201 residues: Large ribosomal subunit protein uL4 (201 aa).

The disordered stretch occupies residues 43-73 (SRGQKTRAEVTGSGKKPWRQKGTGRARSGSV).

The protein belongs to the universal ribosomal protein uL4 family. Part of the 50S ribosomal subunit.

One of the primary rRNA binding proteins, this protein initially binds near the 5'-end of the 23S rRNA. It is important during the early stages of 50S assembly. It makes multiple contacts with different domains of the 23S rRNA in the assembled 50S subunit and ribosome. Its function is as follows. Forms part of the polypeptide exit tunnel. This chain is Large ribosomal subunit protein uL4, found in Sodalis glossinidius (strain morsitans).